The following is a 512-amino-acid chain: Secreted triacylglycerol lipase LIP5 (512 aa).

An N-terminal signal peptide occupies residues 1-17 (MMYASLVHWLALAVALA). Residues C118 and C292 are joined by a disulfide bond. Catalysis depends on S203, which acts as the Nucleophile. Residue N316 is glycosylated (N-linked (GlcNAc...) asparagine). Residue D352 is part of the active site. N361 is a glycosylation site (N-linked (GlcNAc...) asparagine). H386 is a catalytic residue. An N-linked (GlcNAc...) asparagine glycan is attached at N453. The disordered stretch occupies residues 480–512 (KGDISPGEGGDHTKESKKAAAKFKAEKKHGKHH). Residues 488-497 (GGDHTKESKK) are compositionally biased toward basic and acidic residues. The segment covering 498–512 (AAAKFKAEKKHGKHH) has biased composition (basic residues).

Belongs to the AB hydrolase superfamily. Lipase family. Class Lip subfamily.

The protein localises to the secreted. It carries out the reaction a triacylglycerol + H2O = a diacylglycerol + a fatty acid + H(+). The catalysed reaction is a monoacylglycerol + H2O = glycerol + a fatty acid + H(+). The enzyme catalyses a diacylglycerol + H2O = a monoacylglycerol + a fatty acid + H(+). Functionally, secreted lipase that hydrolyzes acylglycerol lipids such as triacylglycerols and consequently releases free fatty acid. Can hydrolyze 4-nitrophenyl palmitate to release 4-nitrophenol and palmitoic acid. Due to an absence of fatty acid synthase genes in Malassezia species, secretory lipases are essential for the yeast to generate free fatty acids from degradation of sebum and assimilate them as lipid sources for growth. Plays an essential role at the pathogen-host interface during disease progression. This Malassezia restricta (strain ATCC 96810 / NBRC 103918 / CBS 7877) (Seborrheic dermatitis infection agent) protein is Secreted triacylglycerol lipase LIP5.